Reading from the N-terminus, the 457-residue chain is Succinate-semialdehyde dehydrogenase [NADP(+)] 1 (457 aa).

Residue glycine 209–glycine 214 coordinates NADP(+). Active-site residues include glutamate 231 and cysteine 265.

This sequence belongs to the aldehyde dehydrogenase family.

It catalyses the reaction succinate semialdehyde + NAD(+) + H2O = succinate + NADH + 2 H(+). The catalysed reaction is succinate semialdehyde + NADP(+) + H2O = succinate + NADPH + 2 H(+). In terms of biological role, catalyzes the NADP(+)-dependent oxidation of succinate semialdehyde to succinate. It is believed to be the main source of succinate semialdehyde dehydrogenase activity in Mycobacterium. This chain is Succinate-semialdehyde dehydrogenase [NADP(+)] 1 (gabD1), found in Mycobacterium bovis (strain ATCC BAA-935 / AF2122/97).